A 226-amino-acid chain; its full sequence is PKHD-type hydroxylase Abu_0724 (226 aa).

Positions His78–Ser178 constitute a Fe2OG dioxygenase domain. The Fe cation site is built by His96, Asp98, and His159. 2-oxoglutarate is bound at residue Arg169.

It depends on Fe(2+) as a cofactor. L-ascorbate is required as a cofactor.

This is PKHD-type hydroxylase Abu_0724 from Aliarcobacter butzleri (strain RM4018) (Arcobacter butzleri).